Here is a 241-residue protein sequence, read N- to C-terminus: UDP-2,3-diacylglucosamine hydrolase (241 aa).

Residues aspartate 8, histidine 10, aspartate 41, asparagine 79, and histidine 114 each contribute to the Mn(2+) site. Position 79–80 (asparagine 79–arginine 80) interacts with substrate. Residues aspartate 122, serine 160, asparagine 164, lysine 167, and histidine 195 each coordinate substrate. Mn(2+)-binding residues include histidine 195 and histidine 197.

This sequence belongs to the LpxH family. Mn(2+) serves as cofactor.

It is found in the cell inner membrane. The enzyme catalyses UDP-2-N,3-O-bis[(3R)-3-hydroxytetradecanoyl]-alpha-D-glucosamine + H2O = 2-N,3-O-bis[(3R)-3-hydroxytetradecanoyl]-alpha-D-glucosaminyl 1-phosphate + UMP + 2 H(+). The protein operates within glycolipid biosynthesis; lipid IV(A) biosynthesis; lipid IV(A) from (3R)-3-hydroxytetradecanoyl-[acyl-carrier-protein] and UDP-N-acetyl-alpha-D-glucosamine: step 4/6. Its function is as follows. Hydrolyzes the pyrophosphate bond of UDP-2,3-diacylglucosamine to yield 2,3-diacylglucosamine 1-phosphate (lipid X) and UMP by catalyzing the attack of water at the alpha-P atom. Involved in the biosynthesis of lipid A, a phosphorylated glycolipid that anchors the lipopolysaccharide to the outer membrane of the cell. This Aeromonas hydrophila subsp. hydrophila (strain ATCC 7966 / DSM 30187 / BCRC 13018 / CCUG 14551 / JCM 1027 / KCTC 2358 / NCIMB 9240 / NCTC 8049) protein is UDP-2,3-diacylglucosamine hydrolase.